Reading from the N-terminus, the 1931-residue chain is Cytadherence high molecular weight protein 2 (1931 aa).

3 coiled-coil regions span residues 1626 to 1659 (KEHQ…LTES), 1768 to 1846 (FNTQ…IKTN), and 1903 to 1930 (HAKK…KQTS).

Its function is as follows. Component of the cytoskeleton-like structure which stabilizes the shape of the wall-less Mycoplasma. This cytoskeleton-like network of accessory proteins containing HMW proteins 1 to 5 allows the proper anchoring of cytadhesin proteins in the mycoplasmal membrane at the attachment organelle. The polypeptide is Cytadherence high molecular weight protein 2 (hlp2) (Mycoplasmoides gallisepticum (strain R(low / passage 15 / clone 2)) (Mycoplasma gallisepticum)).